The following is a 377-amino-acid chain: Chorismate synthase (377 aa).

Residue Arg-47 participates in NADP(+) binding. Residues 124–126, 252–253, Gly-296, 311–315, and Arg-338 contribute to the FMN site; these read RSS, NS, and KPTPS.

Belongs to the chorismate synthase family. Requires FMNH2 as cofactor.

It carries out the reaction 5-O-(1-carboxyvinyl)-3-phosphoshikimate = chorismate + phosphate. It participates in metabolic intermediate biosynthesis; chorismate biosynthesis; chorismate from D-erythrose 4-phosphate and phosphoenolpyruvate: step 7/7. Its function is as follows. Catalyzes the anti-1,4-elimination of the C-3 phosphate and the C-6 proR hydrogen from 5-enolpyruvylshikimate-3-phosphate (EPSP) to yield chorismate, which is the branch point compound that serves as the starting substrate for the three terminal pathways of aromatic amino acid biosynthesis. This reaction introduces a second double bond into the aromatic ring system. This chain is Chorismate synthase, found in Methanococcus vannielii (strain ATCC 35089 / DSM 1224 / JCM 13029 / OCM 148 / SB).